A 188-amino-acid polypeptide reads, in one-letter code: UPF0301 protein PsycPRwf_0144 (188 aa).

Belongs to the UPF0301 (AlgH) family.

The chain is UPF0301 protein PsycPRwf_0144 from Psychrobacter sp. (strain PRwf-1).